We begin with the raw amino-acid sequence, 512 residues long: Lysine--tRNA ligase (512 aa).

Residues E422 and E429 each contribute to the Mg(2+) site.

The protein belongs to the class-II aminoacyl-tRNA synthetase family. As to quaternary structure, homodimer. The cofactor is Mg(2+).

Its subcellular location is the cytoplasm. The enzyme catalyses tRNA(Lys) + L-lysine + ATP = L-lysyl-tRNA(Lys) + AMP + diphosphate. In Paraburkholderia phymatum (strain DSM 17167 / CIP 108236 / LMG 21445 / STM815) (Burkholderia phymatum), this protein is Lysine--tRNA ligase.